The primary structure comprises 114 residues: Cytochrome c oxidase subunit 4B (114 aa).

The next 3 helical transmembrane spans lie at Gln29–Thr49, Phe56–Phe76, and Ala89–Leu109.

This sequence belongs to the cytochrome c oxidase bacterial subunit 4 family.

The protein resides in the cell membrane. It catalyses the reaction 4 Fe(II)-[cytochrome c] + O2 + 8 H(+)(in) = 4 Fe(III)-[cytochrome c] + 2 H2O + 4 H(+)(out). This is Cytochrome c oxidase subunit 4B (ctaF) from Alkalihalophilus pseudofirmus (strain ATCC BAA-2126 / JCM 17055 / OF4) (Bacillus pseudofirmus).